Reading from the N-terminus, the 417-residue chain is Methyltransferase/ribosomally synthesized cyclic peptide omphalotin A precursor ophMA (417 aa).

The methyltransferase domain stretch occupies residues 1–251 (METSTQTKAG…GVSTFYIPPK (251 aa)). Residues R72, Y76, and Y98 contribute to the active site. S-adenosyl-L-methionine is bound by residues Y98, H100, V103, A130, Q172, A213, S244, and T245. The clasp domain stretch occupies residues 252-378 (ARKASNLDII…WAIRCAMKNM (127 aa)). The segment at 379–399 (PSSLLDAARESGEEASQNGFP) is precursor leader. N-methylvaline occurs at positions 401, 403, and 404. G405 carries the post-translational modification N-methylglycine. V406 carries the N-methylvaline modification. An N-methylisoleucine modification is found at I407. An N-methylglycine modification is found at G408. I410 carries the post-translational modification N-methylisoleucine. G411 is subject to N-methylglycine. N-methylvaline is present on V413.

In the N-terminal section; belongs to the precorrin methyltransferase family. Homodimer. In terms of processing, ophMA automethylates at Val-401, Val-403, Val-404, Gly-405, Val-406, Ile-407, Gly-408, Ile-410, Gly-411 and Val-413 before being processed by the prolyloligopeptidase ophP which likely forms a peptidyl ester upon removal of the follower propeptide, which then undergoes macrocyclization with the N-terminus of the modified core peptide. Peptide backbone alpha-N-methylations change the physicochemical properties of amide bonds to provide structural constraints and other favorable characteristics including biological membrane permeability to peptides.

The protein operates within mycotoxin biosynthesis. In terms of biological role, fusion protein of the methyltransferase ophM and the omphalotin core peptide; part of the gene cluster that mediates the biosynthesis of omphalotin A, a highly methylated cyclic dodecapeptide with nematodicidal activity. Omphalotin A derives from the C-terminus of the ophMA protein, and it is the ophMA protein that methylates its own C-terminus using S-adenosyl methionine (SAM). The C-terminus is subsequently cleaved off and macrocyclized by the prolyloligopeptidase ophP to give the final product. The polypeptide is Methyltransferase/ribosomally synthesized cyclic peptide omphalotin A precursor ophMA (Omphalotus olearius (Jack o'lantern)).